The following is a 1913-amino-acid chain: GREB1-like protein (1913 aa).

Over residues 86-96 (MEDDEDEEEMS) the composition is skewed to acidic residues. Disordered regions lie at residues 86-111 (MEDD…KPAP), 281-309 (NGTS…SPRP), 1097-1157 (EAER…TSSI), and 1179-1207 (DSLD…LAWS). Over residues 289 to 301 (KSSSCSSTPSRPG) the composition is skewed to low complexity. Polar residues predominate over residues 1118-1157 (PQSNSSAVTGTSGSIMENGVSSSSTAGKPQQQLLTPTSSI). A compositionally biased stretch (low complexity) spans 1187–1200 (SSTTSKPSSSSSSS). A helical transmembrane segment spans residues 1832–1852 (GVFFSGLLLYLCDSFVGADLL).

This sequence belongs to the GREB1 family. In terms of tissue distribution, expressed in the inner ear, with a high presence in the spiral ganglia, cochlear nerve bundles, and hair cells.

The protein localises to the membrane. Its function is as follows. Plays a major role in early metanephros and genital development. This is GREB1-like protein (Greb1l) from Mus musculus (Mouse).